Consider the following 103-residue polypeptide: Viscotoxin-B (103 aa).

A signal peptide spans 1–6 (FRNVES). 3 cysteine pairs are disulfide-bonded: Cys-9–Cys-46, Cys-10–Cys-38, and Cys-22–Cys-32. A propeptide spans 53 to 103 (FYCTLGCQSSKCASITTPPNSEVDAEAVRCKAACSNLCDFGVTTNQEIQDD) (acidic domain).

Belongs to the plant thionin (TC 1.C.44) family.

The protein localises to the secreted. Its function is as follows. Thionins are small plant proteins which are toxic to animal cells. They seem to exert their toxic effect at the level of the cell membrane. Their precise function is not known. The sequence is that of Viscotoxin-B (THI2.2) from Viscum album (European mistletoe).